The chain runs to 500 residues: Cytochrome P450 71B26 (500 aa).

The chain crosses the membrane as a helical span at residues 1–21 (MDSIWILSLLFFIIFLLLAAF). Cys440 contributes to the heme binding site.

It belongs to the cytochrome P450 family. It depends on heme as a cofactor.

The protein localises to the membrane. In Arabidopsis thaliana (Mouse-ear cress), this protein is Cytochrome P450 71B26 (CYP71B26).